We begin with the raw amino-acid sequence, 326 residues long: Membrane-associated kinase regulator 5 (326 aa).

Disordered stretches follow at residues 188–239 (TKKQ…GMSP) and 267–326 (GSRE…KISD). 2 stretches are compositionally biased toward low complexity: residues 190-202 (KQSS…PTSS) and 270-305 (ESSL…SSDS).

As to expression, expressed in roots.

It is found in the cell membrane. It localises to the cytoplasm. Its subcellular location is the cytosol. Its function is as follows. Positive effector of CLE45 peptide signaling. Post-transcriptionally regulated amplifier of the CLE45 peptide signal that acts downstream of BAM3 in the regulation of the transition of root protophloem cells from proliferation to differentiation; thus preventing primary root elongation but stimulating lateral roots development. This chain is Membrane-associated kinase regulator 5, found in Arabidopsis thaliana (Mouse-ear cress).